Reading from the N-terminus, the 341-residue chain is N-acetyl-gamma-glutamyl-phosphate reductase (341 aa).

Cys147 is an active-site residue.

The protein belongs to the NAGSA dehydrogenase family. Type 1 subfamily.

The protein resides in the cytoplasm. It carries out the reaction N-acetyl-L-glutamate 5-semialdehyde + phosphate + NADP(+) = N-acetyl-L-glutamyl 5-phosphate + NADPH + H(+). Its pathway is amino-acid biosynthesis; L-arginine biosynthesis; N(2)-acetyl-L-ornithine from L-glutamate: step 3/4. Its function is as follows. Catalyzes the NADPH-dependent reduction of N-acetyl-5-glutamyl phosphate to yield N-acetyl-L-glutamate 5-semialdehyde. The protein is N-acetyl-gamma-glutamyl-phosphate reductase of Staphylococcus epidermidis (strain ATCC 35984 / DSM 28319 / BCRC 17069 / CCUG 31568 / BM 3577 / RP62A).